Reading from the N-terminus, the 591-residue chain is Aspartate--tRNA ligase (591 aa).

Glu-171 contacts L-aspartate. Positions 195 to 198 (QLFK) are aspartate. Arg-217 lines the L-aspartate pocket. ATP-binding positions include 217–219 (RDE) and Gln-226. Residue His-448 participates in L-aspartate binding. Glu-482 contacts ATP. Position 489 (Arg-489) interacts with L-aspartate. Position 534-537 (534-537 (GLDR)) interacts with ATP.

It belongs to the class-II aminoacyl-tRNA synthetase family. Type 1 subfamily. Homodimer.

It localises to the cytoplasm. It catalyses the reaction tRNA(Asp) + L-aspartate + ATP = L-aspartyl-tRNA(Asp) + AMP + diphosphate. Catalyzes the attachment of L-aspartate to tRNA(Asp) in a two-step reaction: L-aspartate is first activated by ATP to form Asp-AMP and then transferred to the acceptor end of tRNA(Asp). The chain is Aspartate--tRNA ligase from Vibrio cholerae serotype O1 (strain ATCC 39541 / Classical Ogawa 395 / O395).